The following is a 564-amino-acid chain: Putative zinc metalloproteinase in scaA 5'region (564 aa).

Residues 1–564 (MTRLQDDFYD…KEADFSAEEF (564 aa)) form the Peptidase M13 domain. Residue His478 participates in Zn(2+) binding. The active site involves Glu479. Zn(2+) is bound by residues His482 and Glu538. The Proton donor role is filled by Asp542.

It belongs to the peptidase M13 family. Requires Zn(2+) as cofactor.

The chain is Putative zinc metalloproteinase in scaA 5'region from Streptococcus gordonii (strain Challis / ATCC 35105 / BCRC 15272 / CH1 / DL1 / V288).